A 328-amino-acid chain; its full sequence is D-cysteine desulfhydrase (328 aa).

Lys51 bears the N6-(pyridoxal phosphate)lysine mark.

Belongs to the ACC deaminase/D-cysteine desulfhydrase family. In terms of assembly, homodimer. Pyridoxal 5'-phosphate serves as cofactor.

It carries out the reaction D-cysteine + H2O = hydrogen sulfide + pyruvate + NH4(+) + H(+). In terms of biological role, catalyzes the alpha,beta-elimination reaction of D-cysteine and of several D-cysteine derivatives. It could be a defense mechanism against D-cysteine. This is D-cysteine desulfhydrase from Salmonella paratyphi B (strain ATCC BAA-1250 / SPB7).